The sequence spans 109 residues: Antifungal protein ginkbilobin-like protein (109 aa).

The Gnk2-homologous domain occupies 4–109; sequence TNFVSSACNT…CFIQYEQHSF (106 aa). 3 disulfides stabilise this stretch: cysteine 11–cysteine 87, cysteine 63–cysteine 72, and cysteine 75–cysteine 100. Asparagine 12 serves as a coordination point for alpha-D-mannopyranose. Residues arginine 94 and glutamate 105 each coordinate alpha-D-mannopyranose.

Exerts antifungal activity through its carbohydrate-binding specificity. The polypeptide is Antifungal protein ginkbilobin-like protein (Picea abies (Norway spruce)).